Reading from the N-terminus, the 188-residue chain is Probable RNA-binding protein 18 (188 aa).

Residues His23–Ala104 form the RRM domain. The tract at residues Glu151–Arg188 is disordered. The span at Gln177–Arg188 shows a compositional bias: basic residues.

The chain is Probable RNA-binding protein 18 (rbm18) from Danio rerio (Zebrafish).